Reading from the N-terminus, the 450-residue chain is Sulfide:quinone oxidoreductase, mitochondrial (450 aa).

FAD-binding positions include 53 to 54 (SG), Glu75, Gln83, and Val118. N6-acetyllysine is present on Lys173. Cys201 acts as the Cysteine persulfide intermediate in catalysis. Cys201 and Cys379 form a disulfide bridge. Asp336 is an FAD binding site. Phosphoserine is present on Ser343. Residue 344–347 (KTAA) coordinates FAD. The active-site Cysteine persulfide intermediate is the Cys379.

This sequence belongs to the SQRD family. FAD serves as cofactor.

It is found in the mitochondrion. It carries out the reaction ubiquinone-10 + hydrogen sulfide + sulfite + 2 H(+) = ubiquinol-10 + thiosulfate. It catalyses the reaction a quinone + hydrogen sulfide + glutathione + H(+) = S-sulfanylglutathione + a quinol. The enzyme catalyses ubiquinone-10 + hydrogen sulfide + glutathione + H(+) = S-sulfanylglutathione + ubiquinol-10. Its function is as follows. Catalyzes the oxidation of hydrogen sulfide with the help of a quinone, such as ubiquinone-10, giving rise to thiosulfate and ultimately to sulfane (molecular sulfur) atoms. Requires an additional electron acceptor; can use sulfite, sulfide or cyanide (in vitro). It is believed the in vivo electron acceptor is glutathione. The chain is Sulfide:quinone oxidoreductase, mitochondrial from Homo sapiens (Human).